We begin with the raw amino-acid sequence, 351 residues long: Tryptophan--tRNA ligase (351 aa).

ATP-binding positions include 11-13 (RPT) and 19-20 (GH). Positions 12–20 (PTGALHLGH) match the 'HIGH' region motif. Asp-139 lines the L-tryptophan pocket. ATP contacts are provided by residues 151 to 153 (GRD), Leu-190, and 198 to 202 (KMSKS). Residues 198–202 (KMSKS) carry the 'KMSKS' region motif.

The protein belongs to the class-I aminoacyl-tRNA synthetase family. In terms of assembly, homodimer.

The protein localises to the cytoplasm. It carries out the reaction tRNA(Trp) + L-tryptophan + ATP = L-tryptophyl-tRNA(Trp) + AMP + diphosphate + H(+). Catalyzes the attachment of tryptophan to tRNA(Trp). This Borreliella burgdorferi (strain ATCC 35210 / DSM 4680 / CIP 102532 / B31) (Borrelia burgdorferi) protein is Tryptophan--tRNA ligase.